A 514-amino-acid polypeptide reads, in one-letter code: 2,3-bisphosphoglycerate-independent phosphoglycerate mutase (514 aa).

Positions 14 and 64 each coordinate Mn(2+). The active-site Phosphoserine intermediate is the Ser-64. Substrate-binding positions include His-125, 155 to 156 (RD), Arg-187, Arg-193, 263 to 266 (RADR), and Lys-336. Mn(2+) is bound by residues Asp-403, His-407, Asp-444, His-445, and His-463.

Belongs to the BPG-independent phosphoglycerate mutase family. As to quaternary structure, monomer. Requires Mn(2+) as cofactor.

It carries out the reaction (2R)-2-phosphoglycerate = (2R)-3-phosphoglycerate. It participates in carbohydrate degradation; glycolysis; pyruvate from D-glyceraldehyde 3-phosphate: step 3/5. Functionally, catalyzes the interconversion of 2-phosphoglycerate and 3-phosphoglycerate. This Shewanella sp. (strain W3-18-1) protein is 2,3-bisphosphoglycerate-independent phosphoglycerate mutase.